The following is a 600-amino-acid chain: ATP-dependent lipid A-core flippase (600 aa).

Helical transmembrane passes span 27–47, 83–103, 174–194, and 267–287; these read ISLF…QPML, LLII…NYFL, LLFM…LIAV, and PLLQ…VLYL. One can recognise an ABC transmembrane type-1 domain in the interval 31–322; the sequence is LISIVGFLIF…LSEVSSTIQK (292 aa). One can recognise an ABC transporter domain in the interval 354-590; that stretch reads LDVRNLSFTY…NGYYARLNAM (237 aa). Residue 388–395 coordinates ATP; it reads GRSGSGKS.

It belongs to the ABC transporter superfamily. Lipid exporter (TC 3.A.1.106) family. Homodimer.

The protein localises to the cell inner membrane. The enzyme catalyses ATP + H2O + lipid A-core oligosaccharideSide 1 = ADP + phosphate + lipid A-core oligosaccharideSide 2.. In terms of biological role, involved in lipopolysaccharide (LPS) biosynthesis. Translocates lipid A-core from the inner to the outer leaflet of the inner membrane. Transmembrane domains (TMD) form a pore in the inner membrane and the ATP-binding domain (NBD) is responsible for energy generation. The protein is ATP-dependent lipid A-core flippase of Pseudomonas fluorescens (strain Pf0-1).